The primary structure comprises 30 residues: V-type proton ATPase catalytic subunit A isoform 2 (30 aa).

The protein belongs to the ATPase alpha/beta chains family. V-ATPase is a heteromultimeric enzyme composed of a peripheral catalytic V1 complex (main components: subunits A, B, C, D, E, and F) attached to an integral membrane V0 proton pore complex (main component: the proteolipid protein).

The catalysed reaction is ATP + H2O + 4 H(+)(in) = ADP + phosphate + 5 H(+)(out). Catalytic subunit of the peripheral V1 complex of vacuolar ATPase. V-ATPase vacuolar ATPase is responsible for acidifying a variety of intracellular compartments in eukaryotic cells. This Equisetum arvense (Field horsetail) protein is V-type proton ATPase catalytic subunit A isoform 2.